We begin with the raw amino-acid sequence, 901 residues long: PGC-1 and ERR-induced regulator in muscle protein 1 (901 aa).

Disordered regions lie at residues 29–511 (QAGL…MPAS), 564–671 (SLEG…MGPG), and 731–752 (RHQE…APPP). Residues 100–112 (GQQTPSTSAQSEA) are compositionally biased toward polar residues. Positions 157–178 (GEPAGSPESPVHSAAPQRSPGS) are enriched in low complexity. Composition is skewed to polar residues over residues 267–276 (LSTSVSTTEQ), 347–379 (DESQ…QSTP), 387–418 (EPQS…QSTP), 426–457 (EPQS…QSTP), and 465–484 (EPQS…STPT). Positions 608-624 (PSSEEPGSGEVSGPLSP) are enriched in low complexity.

The protein resides in the cytoplasm. Its subcellular location is the nucleus. Regulates the expression of selective PPARGC1A/B and ESRRA/B/G target genes with roles in glucose and lipid metabolism, energy transfer, contractile function, muscle mitochondrial biogenesis and oxidative capacity. Required for the efficient induction of MT-CO2, MT-CO3, COX4I1, TFB1M, TFB2M, POLRMT and SIRT3 by PPARGC1A. Positively regulates the PPARGC1A/ESRRG-induced expression of CKMT2, TNNI3 and SLC2A4 and negatively regulates the PPARGC1A/ESRRG-induced expression of PDK4. The chain is PGC-1 and ERR-induced regulator in muscle protein 1 (PERM1) from Bos taurus (Bovine).